The chain runs to 405 residues: Nuclear RNA export factor 2 (405 aa).

Positions 1 to 33 are disordered; sequence MRGQNRRGYRNIEGRLSLSSHSSHSSPRQTHVT. Low complexity predominate over residues 16–26; sequence LSLSSHSSHSS. The region spanning 26 to 94 is the RRM domain; the sequence is SPRQTHVTNL…SVVLQHIGYK (69 aa). LRR repeat units follow at residues 97–118 and 123–144; these read RISGISFSNNRLCHLDHLSSLS and FLKFLDLSHNQISSGEELKKLG. An NTF2 domain is found at 215–382; the sequence is LVEEFIITYY…VAIVSDQLFI (168 aa).

The protein belongs to the NXF family.

The protein localises to the nucleus. Its function is as follows. Involved in the export of cellular mRNA to the cytoplasm. Plays a role in the nuclear retention of unspliced mRNAs. In Caenorhabditis elegans, this protein is Nuclear RNA export factor 2.